Here is a 354-residue protein sequence, read N- to C-terminus: Uroporphyrinogen decarboxylase (354 aa).

Substrate is bound by residues 30 to 34 (RQAGR), Phe49, Asp79, Tyr156, Ser211, and His326.

This sequence belongs to the uroporphyrinogen decarboxylase family. As to quaternary structure, homodimer.

Its subcellular location is the cytoplasm. It carries out the reaction uroporphyrinogen III + 4 H(+) = coproporphyrinogen III + 4 CO2. It functions in the pathway porphyrin-containing compound metabolism; protoporphyrin-IX biosynthesis; coproporphyrinogen-III from 5-aminolevulinate: step 4/4. Its function is as follows. Catalyzes the decarboxylation of four acetate groups of uroporphyrinogen-III to yield coproporphyrinogen-III. The polypeptide is Uroporphyrinogen decarboxylase (Salinibacter ruber (strain DSM 13855 / M31)).